The sequence spans 387 residues: 3-ketoacyl-CoA thiolase (387 aa).

The Acyl-thioester intermediate role is filled by C91. Residues H343 and C373 each act as proton acceptor in the active site.

It belongs to the thiolase-like superfamily. Thiolase family. Heterotetramer of two alpha chains (FadB) and two beta chains (FadA).

The protein localises to the cytoplasm. The enzyme catalyses an acyl-CoA + acetyl-CoA = a 3-oxoacyl-CoA + CoA. It functions in the pathway lipid metabolism; fatty acid beta-oxidation. Functionally, catalyzes the final step of fatty acid oxidation in which acetyl-CoA is released and the CoA ester of a fatty acid two carbons shorter is formed. The chain is 3-ketoacyl-CoA thiolase from Aliivibrio fischeri (strain ATCC 700601 / ES114) (Vibrio fischeri).